The following is a 1543-amino-acid chain: Tubby-related protein 4 (1543 aa).

7 WD repeats span residues 6 to 72 (EHGP…STPQ), 73 to 115 (RINF…YEGR), 116 to 158 (WSVE…SGQR), 159 to 237 (HWSS…SDDY), 238 to 276 (APPQ…YDDL), 277 to 334 (SPTV…GEHI), and 335 to 372 (FTLD…RVEH). The region spanning 364-414 (ALYVVRVEHRVSSLQLLCQQAIASTLREDKDVSKLTLPPRLCSYLSTAFIP) is the SOCS box domain. Disordered stretches follow at residues 530 to 577 (SPKI…SVGS) and 829 to 850 (TKIN…TAAP). S577 is subject to Phosphoserine. Residues R945 and R950 each carry the asymmetric dimethylarginine modification. 3 disordered regions span residues 1004–1058 (SPRA…HTAS), 1326–1355 (VPQR…AITE), and 1367–1453 (DFNS…ASEK). Residues 1036 to 1050 (TCSQCSGTGPSSQPG) show a composition bias toward polar residues. Over residues 1329–1347 (RTEKFGKKNRKRLDSRAEE) the composition is skewed to basic and acidic residues. 2 positions are modified to phosphoserine: S1343 and S1374. The span at 1443–1453 (EEAKCRRASEK) shows a compositional bias: basic and acidic residues. The tract at residues 1466–1543 (VMANKQPLWN…ALANVTQRLK (78 aa)) is TUB.

The protein belongs to the TUB family. In terms of tissue distribution, expressed mainly in the brain, skeletal muscle, testis and kidney.

The protein resides in the cytoplasm. It participates in protein modification; protein ubiquitination. Functionally, may be a substrate-recognition component of a SCF-like ECS (Elongin-Cullin-SOCS-box protein) E3 ubiquitin ligase complex which mediates the ubiquitination and subsequent proteasomal degradation of target proteins. This is Tubby-related protein 4 (TULP4) from Homo sapiens (Human).